The primary structure comprises 167 residues: Ribosome maturation factor RimM (167 aa).

The region spanning 94-165 (ENEYYYSDII…KIIITPMEGL (72 aa)) is the PRC barrel domain.

This sequence belongs to the RimM family. In terms of assembly, binds ribosomal protein uS19.

The protein localises to the cytoplasm. Functionally, an accessory protein needed during the final step in the assembly of 30S ribosomal subunit, possibly for assembly of the head region. Essential for efficient processing of 16S rRNA. May be needed both before and after RbfA during the maturation of 16S rRNA. It has affinity for free ribosomal 30S subunits but not for 70S ribosomes. This is Ribosome maturation factor RimM from Staphylococcus aureus (strain bovine RF122 / ET3-1).